The chain runs to 616 residues: MSTIQSETDCYDIIEVLGKGTFGEVAKGWRRSTGEMVAIKILKNDAYRNRIIKNELKLLHCMRGLDPEEAHVIRFLEFFHDALKFYLVFELLEQNLFEFQKENNFAPLPARHIRTVTLQVLTALARLKELAIIHADLKPENIMLVDQTRCPFRVKVIDFGSASIFSEVRYVKEPYIQSRFYRAPEILLGLPFCEKVDVWSLGCVMAELHLGWPLYPGNNEYDQVRYICETQGLPKPHLLHAACKAHHFFKRNPHPDAANPWQLKSSADYLAETKVRPLERRKYMLKSLDQIETVNGGSVASRLTFPDREALAEHADLKSMVELIKRMLTWESHERISPSAALRHPFVSMQQLRSAHETTHYYQLSLRSYRLSLQVEGKPPTPVVAAEDGTPYYCLAEEKEAAGMGSVAGSSPFFREEKAPGMQRAIDQLDDLSLQEAGHGLWGETCTNAVSDMMVPLKAAITGHHVPDSGPEPILAFYSSRLAGRHKARKPPAGSKSDSNFSNLIRLSQVSPEDDRPCRGSSWEEGEHLGASAEPLAILQRDEDGPNIDNMTMEAERPDPELFDPSSCPGEWLSEPDCTLESVRGPRAQGLPPRRSHQHGPPRGATSFLQHVTGHH.

In terms of domain architecture, Protein kinase spans 11-347 (YDIIEVLGKG…PSAALRHPFV (337 aa)). Residues 17–25 (LGKGTFGEV) and K40 contribute to the ATP site. D136 serves as the catalytic Proton acceptor. The segment at 486-616 (HKARKPPAGS…SFLQHVTGHH (131 aa)) is disordered. Residues 496–511 (KSDSNFSNLIRLSQVS) show a composition bias toward polar residues. The residue at position 511 (S511) is a Phosphoserine.

It belongs to the protein kinase superfamily. CMGC Ser/Thr protein kinase family. HIPK subfamily. Post-translationally, autophosphorylated.

It localises to the cytoplasm. It carries out the reaction L-seryl-[protein] + ATP = O-phospho-L-seryl-[protein] + ADP + H(+). The catalysed reaction is L-threonyl-[protein] + ATP = O-phospho-L-threonyl-[protein] + ADP + H(+). In terms of biological role, protein kinase that phosphorylates human TP53 at Ser-9, and thus induces TP53 repression of BIRC5 promoter. May act as a corepressor of transcription factors (Potential). In Homo sapiens (Human), this protein is Homeodomain-interacting protein kinase 4 (HIPK4).